The following is a 231-amino-acid chain: 5'-methylthioadenosine/S-adenosylhomocysteine nucleosidase (231 aa).

The active-site Proton acceptor is the E12. Substrate contacts are provided by residues G78, V153, and 174–175 (ME). D198 acts as the Proton donor in catalysis.

The protein belongs to the PNP/UDP phosphorylase family. MtnN subfamily.

It catalyses the reaction S-adenosyl-L-homocysteine + H2O = S-(5-deoxy-D-ribos-5-yl)-L-homocysteine + adenine. The enzyme catalyses S-methyl-5'-thioadenosine + H2O = 5-(methylsulfanyl)-D-ribose + adenine. It carries out the reaction 5'-deoxyadenosine + H2O = 5-deoxy-D-ribose + adenine. Its pathway is amino-acid biosynthesis; L-methionine biosynthesis via salvage pathway; S-methyl-5-thio-alpha-D-ribose 1-phosphate from S-methyl-5'-thioadenosine (hydrolase route): step 1/2. In terms of biological role, catalyzes the irreversible cleavage of the glycosidic bond in both 5'-methylthioadenosine (MTA) and S-adenosylhomocysteine (SAH/AdoHcy) to adenine and the corresponding thioribose, 5'-methylthioribose and S-ribosylhomocysteine, respectively. Also cleaves 5'-deoxyadenosine, a toxic by-product of radical S-adenosylmethionine (SAM) enzymes, into 5-deoxyribose and adenine. The chain is 5'-methylthioadenosine/S-adenosylhomocysteine nucleosidase from Vibrio vulnificus (strain CMCP6).